We begin with the raw amino-acid sequence, 341 residues long: Heat-inducible transcription repressor HrcA (341 aa).

It belongs to the HrcA family.

Its function is as follows. Negative regulator of class I heat shock genes (grpE-dnaK-dnaJ and groELS operons). Prevents heat-shock induction of these operons. This Symbiobacterium thermophilum (strain DSM 24528 / JCM 14929 / IAM 14863 / T) protein is Heat-inducible transcription repressor HrcA.